We begin with the raw amino-acid sequence, 166 residues long: MFKKLFGKGKEVQKDIAIYTPLTGEFVKIEDIPDPVFAQKMMGEGFGINPTEGEVVSPIAGRVDNVFPTKHAIGLKADNGLELLVHIGLDTVQLDGEGFEVLVSSGDEVNVGDPLVRFNLEYINNNAKSVISPIIITNTDQAASINIYDENAVIKGETKVIDVTMN.

In terms of domain architecture, PTS EIIA type-1 spans 34-138 (DPVFAQKMMG…SVISPIIITN (105 aa)). H71 and H86 together coordinate Zn(2+). Catalysis depends on H86, which acts as the Tele-phosphohistidine intermediate; for EIIA activity. H86 carries the post-translational modification Phosphohistidine; by HPr.

In terms of assembly, heterodimer with glycerol kinase (glpk). The cofactor is Zn(2+).

It localises to the cytoplasm. Functionally, the phosphoenolpyruvate-dependent sugar phosphotransferase system (sugar PTS), a major carbohydrate active transport system, catalyzes the phosphorylation of incoming sugar substrates concomitantly with their translocation across the cell membrane. The enzyme II complex composed of PtsG and Crr is involved in glucose transport. This Staphylococcus aureus (strain MSSA476) protein is PTS system glucose-specific EIIA component (crr).